Reading from the N-terminus, the 411-residue chain is Na(+)-translocating NADH-quinone reductase subunit F (411 aa).

The chain crosses the membrane as a helical span at residues 5–25; sequence VILALGIAAFTVIVLVLVAII. One can recognise a 2Fe-2S ferredoxin-type domain in the interval 36–130; that stretch reads GDITIGINDD…NMEVELPEEI (95 aa). Residues cysteine 73, cysteine 79, cysteine 82, and cysteine 114 each contribute to the [2Fe-2S] cluster site. The FAD-binding FR-type domain occupies 133–273; that stretch reads VKKWECTVIS…SGPFGEFFAK (141 aa).

The protein belongs to the NqrF family. As to quaternary structure, composed of six subunits; NqrA, NqrB, NqrC, NqrD, NqrE and NqrF. [2Fe-2S] cluster serves as cofactor. It depends on FAD as a cofactor.

Its subcellular location is the cell inner membrane. The enzyme catalyses a ubiquinone + n Na(+)(in) + NADH + H(+) = a ubiquinol + n Na(+)(out) + NAD(+). Its function is as follows. NQR complex catalyzes the reduction of ubiquinone-1 to ubiquinol by two successive reactions, coupled with the transport of Na(+) ions from the cytoplasm to the periplasm. The first step is catalyzed by NqrF, which accepts electrons from NADH and reduces ubiquinone-1 to ubisemiquinone by a one-electron transfer pathway. The sequence is that of Na(+)-translocating NADH-quinone reductase subunit F from Haemophilus influenzae (strain PittEE).